We begin with the raw amino-acid sequence, 396 residues long: Elongation factor Tu (396 aa).

The 196-residue stretch at 10-205 (KTHANIGTIG…AVDEYIPTPE (196 aa)) folds into the tr-type G domain. The G1 stretch occupies residues 19–26 (GHVDHGKT). A GTP-binding site is contributed by 19 to 26 (GHVDHGKT). Thr26 is a binding site for Mg(2+). The tract at residues 61-65 (GITIS) is G2. The interval 82-85 (DCPG) is G3. Residues 82 to 86 (DCPGH) and 137 to 140 (NKCD) contribute to the GTP site. Positions 137-140 (NKCD) are G4. Positions 175–177 (SAL) are G5.

The protein belongs to the TRAFAC class translation factor GTPase superfamily. Classic translation factor GTPase family. EF-Tu/EF-1A subfamily. Monomer.

It is found in the cytoplasm. The enzyme catalyses GTP + H2O = GDP + phosphate + H(+). Its function is as follows. GTP hydrolase that promotes the GTP-dependent binding of aminoacyl-tRNA to the A-site of ribosomes during protein biosynthesis. The polypeptide is Elongation factor Tu (Shouchella clausii (strain KSM-K16) (Alkalihalobacillus clausii)).